The chain runs to 97 residues: U6-theraphotoxin-Hhn1a 3 (97 aa).

The signal sequence occupies residues 1–33 (MLIKQFSRRSKNTKVQILLAFAALFVLAVGSYA). A propeptide spanning residues 34-61 (SESKKLDLRDALFSAMFSADYQLNPQER) is cleaved from the precursor. 3 cysteine pairs are disulfide-bonded: cysteine 63–cysteine 77, cysteine 70–cysteine 82, and cysteine 76–cysteine 89.

The protein belongs to the neurotoxin 10 (Hwtx-1) family. 12 (Hntx-12) subfamily. Expressed by the venom gland.

The protein localises to the secreted. Ion channel inhibitor. This chain is U6-theraphotoxin-Hhn1a 3, found in Cyriopagopus hainanus (Chinese bird spider).